A 542-amino-acid polypeptide reads, in one-letter code: Chaperonin GroEL (542 aa).

ATP-binding positions include 29–32, 86–90, glycine 413, 476–478, and aspartate 492; these read TLGP, DGTTT, and NAA.

The protein belongs to the chaperonin (HSP60) family. In terms of assembly, forms a cylinder of 14 subunits composed of two heptameric rings stacked back-to-back. Interacts with the co-chaperonin GroES.

The protein resides in the cytoplasm. The catalysed reaction is ATP + H2O + a folded polypeptide = ADP + phosphate + an unfolded polypeptide.. Its function is as follows. Together with its co-chaperonin GroES, plays an essential role in assisting protein folding. The GroEL-GroES system forms a nano-cage that allows encapsulation of the non-native substrate proteins and provides a physical environment optimized to promote and accelerate protein folding. The chain is Chaperonin GroEL from Bacillus cytotoxicus (strain DSM 22905 / CIP 110041 / 391-98 / NVH 391-98).